The primary structure comprises 194 residues: Holliday junction branch migration complex subunit RuvA (194 aa).

The interval 1 to 61 (MIASLSGLLE…EDSVSLYGFA (61 aa)) is domain I. The interval 62 to 136 (SVLECTVFEQ…GKLTSVPLEN (75 aa)) is domain II. Residues 136-140 (NRKQE) form a flexible linker region. The tract at residues 141–194 (QAVDRSAEIVQALIGLGWQRQESAAAVESVLEKDQSLTMPEILRNALRYLAKQE) is domain III.

It belongs to the RuvA family. In terms of assembly, homotetramer. Forms an RuvA(8)-RuvB(12)-Holliday junction (HJ) complex. HJ DNA is sandwiched between 2 RuvA tetramers; dsDNA enters through RuvA and exits via RuvB. An RuvB hexamer assembles on each DNA strand where it exits the tetramer. Each RuvB hexamer is contacted by two RuvA subunits (via domain III) on 2 adjacent RuvB subunits; this complex drives branch migration. In the full resolvosome a probable DNA-RuvA(4)-RuvB(12)-RuvC(2) complex forms which resolves the HJ.

It localises to the cytoplasm. In terms of biological role, the RuvA-RuvB-RuvC complex processes Holliday junction (HJ) DNA during genetic recombination and DNA repair, while the RuvA-RuvB complex plays an important role in the rescue of blocked DNA replication forks via replication fork reversal (RFR). RuvA specifically binds to HJ cruciform DNA, conferring on it an open structure. The RuvB hexamer acts as an ATP-dependent pump, pulling dsDNA into and through the RuvAB complex. HJ branch migration allows RuvC to scan DNA until it finds its consensus sequence, where it cleaves and resolves the cruciform DNA. In Tropheryma whipplei (strain Twist) (Whipple's bacillus), this protein is Holliday junction branch migration complex subunit RuvA.